Reading from the N-terminus, the 139-residue chain is Putative pre-16S rRNA nuclease (139 aa).

Belongs to the YqgF nuclease family.

Its subcellular location is the cytoplasm. Could be a nuclease involved in processing of the 5'-end of pre-16S rRNA. This Legionella pneumophila (strain Lens) protein is Putative pre-16S rRNA nuclease.